A 257-amino-acid chain; its full sequence is Ethanolamine ammonia-lyase small subunit (257 aa).

Adenosylcob(III)alamin contacts are provided by valine 153, glutamate 174, and cysteine 203.

It belongs to the EutC family. The basic unit is a heterodimer which dimerizes to form tetramers. The heterotetramers trimerize; 6 large subunits form a core ring with 6 small subunits projecting outwards. Adenosylcob(III)alamin serves as cofactor.

It localises to the bacterial microcompartment. The enzyme catalyses ethanolamine = acetaldehyde + NH4(+). Its pathway is amine and polyamine degradation; ethanolamine degradation. Its function is as follows. Catalyzes the deamination of various vicinal amino-alcohols to oxo compounds. Allows this organism to utilize ethanolamine as the sole source of nitrogen and carbon in the presence of external vitamin B12. This chain is Ethanolamine ammonia-lyase small subunit, found in Rhodococcus erythropolis (Arthrobacter picolinophilus).